Consider the following 977-residue polypeptide: Probable UDP-N-acetylglucosamine--peptide N-acetylglucosaminyltransferase SEC (977 aa).

TPR repeat units follow at residues 2 to 35 (ISSKNGAAMISRPVFLSDRVDEVFSRKLDLSVSS), 53 to 86 (DDARLALAHQLYKGGDFKQALEHSNMVYQRNPLR), 87 to 120 (TDNLLLIGAIYYQLQEYDMCIARNEEALRIQPQF), 121 to 154 (AECYGNMANAWKEKGDTDRAIRYYLIAIELRPNF), 155 to 188 (ADAWSNLASAYMRKGRLSEATQCCQQALSLNPLL), 189 to 222 (VDAHSNLGNLMKAQGLIHEAYSCYLEAVRIQPTF), 223 to 256 (AIAWSNLAGLFMESGDLNRALQYYKEAVKLKPAF), 257 to 290 (PDAYLNLGNVYKALGRPTEAIMCYQHALQMRPNS), 291 to 324 (AMAFGNIASIYYEQGQLDLAIRHYKQALSRDPRF), 325 to 358 (LEAYNNLGNALKDIGRVDEAVRCYNQCLALQPNH), 359 to 392 (PQAMANLGNIYMEWNMMGPASSLFKATLAVTTGL), 393 to 426 (SAPFNNLAIIYKQQGNYSDAISCYNEVLRIDPLA), 427 to 460 (ADALVNRGNTYKEIGRVTEAIQDYMHAINFRPTM), and 461 to 494 (AEAHANLASAYKDSGHVEAAITSYKQALLLRPDF). Residues 495 to 977 (PEATCNLLHT…ENDLEFPHDR (483 aa)) form a catalytic region region.

It belongs to the glycosyltransferase 41 family. O-GlcNAc transferase subfamily. Interacts with TCP14 and TCP15. Interacts with ATX1.

It catalyses the reaction L-seryl-[protein] + UDP-N-acetyl-alpha-D-glucosamine = 3-O-(N-acetyl-beta-D-glucosaminyl)-L-seryl-[protein] + UDP + H(+). The enzyme catalyses L-threonyl-[protein] + UDP-N-acetyl-alpha-D-glucosamine = 3-O-(N-acetyl-beta-D-glucosaminyl)-L-threonyl-[protein] + UDP + H(+). It participates in protein modification; protein glycosylation. O-linked N-acetylglucosamine transferase (OGT) that mediates O-glycosylation of capsid protein (CP) of virus in case of infection by Plum pox virus. OGTs catalyze the addition of nucleotide-activated sugars directly onto the polypeptide through O-glycosidic linkage with the hydroxyl of serine or threonine. Probably acts by adding O-linked sugars to yet unknown proteins. Its OGT activity has been proved in vitro but not in vivo. Required with SPY for gamete and seed development. Mediates O-glycosylation of the DELLA protein RGA, a repressor of the gibberellin (GA) signaling pathway. O-glycosylation by SEC inhibits RGA binding to four of its interactors PIF3, PIF4, JAZ1, and BZR1 that are key regulators in light, jasmonate, and brassinosteroid signaling pathways, respectively. Activates ATX1 through O-GlcNAc modification to augment ATX1-mediated H3K4me3 histone epigenetic modification at FLC locus, thus preventing premature flowering. The chain is Probable UDP-N-acetylglucosamine--peptide N-acetylglucosaminyltransferase SEC from Arabidopsis thaliana (Mouse-ear cress).